Consider the following 280-residue polypeptide: Four and a half LIM domains protein 3 (280 aa).

Ser2 is modified (N-acetylserine). A C4-type zinc finger spans residues 7 to 31 (CAKCSESLYGRKYIQTDDGPYCVPC). LIM zinc-binding domains are found at residues 40-92 (CAEC…CNDC) and 101-153 (CSAC…CVPC). Position 157 is an N6-acetyllysine (Lys157). LIM zinc-binding domains are found at residues 162–212 (CARC…CVTC) and 221–275 (CSSC…CQGC). Lys235 carries the post-translational modification N6-acetyllysine.

As to quaternary structure, interacts with SOX15; the interaction recruits FHL3 to FOXK1 promoters where it acts as a transcriptional coactivator of FOXK1.

The protein resides in the nucleus. It localises to the cytoplasm. Its function is as follows. Recruited by SOX15 to FOXK1 promoters where it acts as a transcriptional coactivator of FOXK1. In Bos taurus (Bovine), this protein is Four and a half LIM domains protein 3 (FHL3).